Here is a 443-residue protein sequence, read N- to C-terminus: EGF-containing fibulin-like extracellular matrix protein 2 (443 aa).

The first 23 residues, 1-23, serve as a signal peptide directing secretion; sequence MLPCASCLPGSLLLWALLLLLLG. Residues 36–81 enclose the EGF-like 1; atypical domain; that stretch reads YTECTDGYEWDPDSQHCRDVNECLTIPEACKGEMKCINHYGGYLCL. 18 disulfide bridges follow: Cys58–Cys121, Cys65–Cys80, Cys71–Cys109, Cys127–Cys140, Cys134–Cys149, Cys151–Cys162, Cys168–Cys177, Cys173–Cys186, Cys188–Cys201, Cys207–Cys217, Cys213–Cys226, Cys228–Cys241, Cys247–Cys258, Cys254–Cys267, Cys269–Cys281, Cys287–Cys300, Cys294–Cys309, and Cys315–Cys327. An EGF-like 2; calcium-binding domain is found at 123-163; the sequence is DVDECAQALHDCRPSQDCHNLPGSYQCTCPDGYRKIGPECV. Positions 164-202 constitute an EGF-like 3; calcium-binding domain; the sequence is DIDECRYRYCQHRCVNLPGSFRCQCEPGFQLGPNNRSCV. Asn198 carries an N-linked (GlcNAc...) asparagine glycan. One can recognise an EGF-like 4; calcium-binding domain in the interval 203-242; it reads DVNECDMGAPCEQRCFNSYGTFLCRCHQGYELHRDGFSCS. Residues 243–282 enclose the EGF-like 5; calcium-binding domain; that stretch reads DIDECSYSSYLCQYRCINEPGRFSCHCPQGYQLLATRLCQ. In terms of domain architecture, EGF-like 6; calcium-binding spans 283–328; the sequence is DIDECESGAHQCSEAQTCVNFHGGYRCVDTNRCVEPYIQVSENRCL. Asn394 carries N-linked (GlcNAc...) asparagine glycosylation.

It belongs to the fibulin family. In terms of assembly, homodimer; disulfide-linked. Multimer; allows heparin binding. Monomer. Interacts with FBN1 (via N-terminal domain); this interaction inhibits EFEMP2 binding to LOX and ELN. Interacts with LOX (via propeptide); this interaction is strong and facilitates formation of ternary complexes with ELN during elastic fiber assembly; this interaction limits interaction of EFEMP2 with FBLN5. Interacts with PITX2. Interacts with ELN with moderate affinity; this interaction regulates ELN self-assembly maturation stage. Interacts with FBLN5 with moderate affinity. Interacts with LOXL1 (via propeptide), LTBP1 and TGFB1 stronger than with LOXL2 and LTBP3. Interacts with PCOLCE. Interacts with collagen type IV trimer (COL4A1-COL4A1-COL4A2), NID2 and moderately with COL15A1-derived endostatin. Interacts with EMILIN1; this interaction promotes the incorporation of EFEMP2 into the extracellular matrix. Interacts with LTBP4; the LTBP4 long form (LTBP4L) has a stronger binding affinity than the LTBP4 short form and the LTBP4 long form promotes fibrillar deposition of EFEMP2. Post-translationally, N-glycosylated; contains mostly complex-type glycans. Not O-glycosylated. In terms of processing, cleaved by ELANE; produces a 50-55 kDa fragment. Cleaved by MMP2 and MMP9; produces several fragments.

It localises to the secreted. The protein localises to the extracellular space. Its subcellular location is the extracellular matrix. The protein resides in the basement membrane. In terms of biological role, plays a crucial role in elastic fiber formation in tissue, and in the formation of ultrastructural connections between elastic laminae and smooth muscle cells in the aorta, therefore participates in terminal differentiation and maturation of smooth muscle cell (SMC) and in the mechanical properties and wall integrity maintenance of the aorta. In addition, is involved in the control of collagen fibril assembly in tissue throught proteolytic activation of LOX leading to cross- linking of collagen and elastin. Also promotes ELN coacervation and participates in the deposition of ELN coacervates on to microfibrils but also regulates ELN cross- linking through LOX interaction. Moreover adheres to the cells through heparin binding in a calcium-dependent manner and regulates vascularlar smooth muscle cells proliferation through angiotensin signaling. The sequence is that of EGF-containing fibulin-like extracellular matrix protein 2 from Homo sapiens (Human).